The chain runs to 423 residues: Deoxyguanosinetriphosphate triphosphohydrolase-like protein (423 aa).

Residues 66 to 216 enclose the HD domain; sequence RLTHSLEVAQ…MDFSDDIAYS (151 aa).

The protein belongs to the dGTPase family. Type 2 subfamily.

This chain is Deoxyguanosinetriphosphate triphosphohydrolase-like protein, found in Corynebacterium diphtheriae (strain ATCC 700971 / NCTC 13129 / Biotype gravis).